The chain runs to 68 residues: UPF0253 protein ASA_2184 (68 aa).

The protein belongs to the UPF0253 family.

This chain is UPF0253 protein ASA_2184, found in Aeromonas salmonicida (strain A449).